The chain runs to 33 residues: MNLEVVAQLTALAFIVLSGPLVIALLAFRKGNL.

The chain crosses the membrane as a helical span at residues 8-28 (QLTALAFIVLSGPLVIALLAF).

Belongs to the Psb30/Ycf12 family. PSII is composed of 1 copy each of membrane proteins PsbA, PsbB, PsbC, PsbD, PsbE, PsbF, PsbH, PsbI, PsbJ, PsbK, PsbL, PsbM, PsbT, PsbX, PsbY, PsbZ, Psb30/Ycf12, peripheral proteins of the oxygen-evolving complex and a large number of cofactors. It forms dimeric complexes.

The protein localises to the plastid. Its subcellular location is the chloroplast thylakoid membrane. A core subunit of photosystem II (PSII), probably helps stabilize the reaction center. In Staurastrum punctulatum (Green alga), this protein is Photosystem II reaction center protein Psb30.